The chain runs to 576 residues: Hemagglutinin-neuraminidase (576 aa).

The span at methionine 1–serine 10 shows a compositional bias: basic and acidic residues. Positions methionine 1–alanine 24 are disordered. Topologically, residues methionine 1 to leucine 37 are intravirion. The interval serine 10 to threonine 14 is incorporation in virion. Polar residues predominate over residues tyrosine 11 to leucine 23. Residues leucine 38–isoleucine 58 form a helical membrane-spanning segment. An involved in interaction with F protein region spans residues serine 59–serine 140. Residues serine 59–serine 576 are Virion surface-facing. Residue asparagine 77 is glycosylated (N-linked (GlcNAc...) asparagine; by host). 4 disulfide bridges follow: cysteine 192–cysteine 216, cysteine 258–cysteine 271, cysteine 357–cysteine 469, and cysteine 463–cysteine 473. Residues asparagine 254 to serine 259 form an involved in neuraminidase activity region. N-linked (GlcNAc...) asparagine; by host glycans are attached at residues asparagine 499 and asparagine 511. A disulfide bridge connects residues cysteine 536 and cysteine 545.

This sequence belongs to the paramyxoviruses hemagglutinin-neuraminidase family. Homotetramer; composed of disulfide-linked homodimers. Interacts with F protein trimer. Post-translationally, N-glycosylated; glycans consist of a mixture of high mannose-type oligosaccharides and of complex-type oligosaccharides.

It localises to the virion membrane. It is found in the host cell membrane. It carries out the reaction Hydrolysis of alpha-(2-&gt;3)-, alpha-(2-&gt;6)-, alpha-(2-&gt;8)- glycosidic linkages of terminal sialic acid residues in oligosaccharides, glycoproteins, glycolipids, colominic acid and synthetic substrates.. In terms of biological role, attaches the virus to sialic acid-containing cell receptors and thereby initiating infection. Binding of HN protein to the receptor induces a conformational change that allows the F protein to trigger virion/cell membranes fusion. Its function is as follows. Neuraminidase activity ensures the efficient spread of the virus by dissociating the mature virions from the neuraminic acid containing glycoproteins. This Sendai virus (strain Harris) (SeV) protein is Hemagglutinin-neuraminidase (HN).